We begin with the raw amino-acid sequence, 589 residues long: Heterogeneous nuclear ribonucleoprotein L (589 aa).

The segment covering 1-16 (MSRRLLPRAEKRRRRL) has biased composition (basic residues). The disordered stretch occupies residues 1 to 100 (MSRRLLPRAE…NYDDPHKTPA (100 aa)). Positions 17–27 (EQRQQPDEQRR) are enriched in basic and acidic residues. The segment covering 38–54 (AGGGGGGGRYYGGGSEG) has biased composition (gly residues). At S52 the chain carries Phosphoserine. Glycyl lysine isopeptide (Lys-Gly) (interchain with G-Cter in SUMO2) cross-links involve residues K59 and K62. Over residues 69 to 90 (QHGGGGGGGGGAGAAGGGGGGE) the composition is skewed to gly residues. At S101 the chain carries Phosphoserine. One can recognise an RRM 1 domain in the interval 102–176 (PVVHIRGLID…HPAFVNYSTS (75 aa)). A Glycyl lysine isopeptide (Lys-Gly) (interchain with G-Cter in SUMO2) cross-link involves residue K136. Position 185 is a phosphoserine (S185). The region spanning 193–270 (SVLLFTILNP…CTLKIEYAKP (78 aa)) is the RRM 2 domain. K269 carries the post-translational modification N6-acetyllysine. Residues 284-301 (DYTNPNLSGQGDPGSNPN) are compositionally biased toward polar residues. The disordered stretch occupies residues 284-378 (DYTNPNLSGQ…PPPPPEYGPH (95 aa)). 2 positions are modified to phosphoserine: S291 and S298. K302 participates in a covalent cross-link: Glycyl lysine isopeptide (Lys-Gly) (interchain with G-Cter in SUMO2). 2 positions are modified to asymmetric dimethylarginine: R354 and R358. Residues 364-375 (GHPPPPPPPPEY) are compositionally biased toward pro residues. Phosphoserine is present on S381. RRM domains are found at residues 382-478 (PVLM…KDFS) and 495-583 (RIQH…LCFS). A Phosphoserine; by CaMK4 modification is found at S544. A Glycyl lysine isopeptide (Lys-Gly) (interchain with G-Cter in SUMO2) cross-link involves residue K568.

Identified in a IGF2BP1-dependent mRNP granule complex containing untranslated mRNAs. Interacts with HNRNPLL. Interacts with APEX1; the interaction is DNA-dependent. Component of a complex with SETD2. Interacts with ELAVL1. Part of a transcription inhibitory ribonucleoprotein complex composed at least of the circular RNA circZNF827, ZNF827 and HNRNPK. Interacts with CHD8 in an RNA-dependent manner. Several isoelectric forms of the L protein are probably the results of post-translational modifications. Post-translationally, phosphorylation at Ser-544 by CaMK4 enhances interaction with a CaMK4-responsive RNA element (CaRRE1), and prevents inclusion of the stress axis-regulated exon (STREX) of the KCNMA1 potassium channel transcripts upon membrane depolarization.

It localises to the nucleus. Its subcellular location is the nucleoplasm. The protein localises to the cytoplasm. Its function is as follows. Splicing factor binding to exonic or intronic sites and acting as either an activator or repressor of exon inclusion. Exhibits a binding preference for CA-rich elements. Component of the heterogeneous nuclear ribonucleoprotein (hnRNP) complexes and associated with most nascent transcripts. Associates, together with APEX1, to the negative calcium responsive element (nCaRE) B2 of the APEX2 promoter. As part of a ribonucleoprotein complex composed at least of ZNF827, HNRNPK and the circular RNA circZNF827 that nucleates the complex on chromatin, may negatively regulate the transcription of genes involved in neuronal differentiation. Regulates alternative splicing of a core group of genes involved in neuronal differentiation, likely by mediating H3K36me3-coupled transcription elongation and co-transcriptional RNA processing via interaction with CHD8. In Homo sapiens (Human), this protein is Heterogeneous nuclear ribonucleoprotein L (HNRNPL).